We begin with the raw amino-acid sequence, 155 residues long: 2-C-methyl-D-erythritol 2,4-cyclodiphosphate synthase (155 aa).

The a divalent metal cation site is built by aspartate 9 and histidine 11. 4-CDP-2-C-methyl-D-erythritol 2-phosphate-binding positions include 9-11 and 35-36; these read DSH and HS. Histidine 43 contributes to the a divalent metal cation binding site. 4-CDP-2-C-methyl-D-erythritol 2-phosphate is bound at residue 57 to 59; sequence DIG.

This sequence belongs to the IspF family. Homotrimer. A divalent metal cation is required as a cofactor.

It carries out the reaction 4-CDP-2-C-methyl-D-erythritol 2-phosphate = 2-C-methyl-D-erythritol 2,4-cyclic diphosphate + CMP. Its pathway is isoprenoid biosynthesis; isopentenyl diphosphate biosynthesis via DXP pathway; isopentenyl diphosphate from 1-deoxy-D-xylulose 5-phosphate: step 4/6. Its function is as follows. Involved in the biosynthesis of isopentenyl diphosphate (IPP) and dimethylallyl diphosphate (DMAPP), two major building blocks of isoprenoid compounds. Catalyzes the conversion of 4-diphosphocytidyl-2-C-methyl-D-erythritol 2-phosphate (CDP-ME2P) to 2-C-methyl-D-erythritol 2,4-cyclodiphosphate (ME-CPP) with a corresponding release of cytidine 5-monophosphate (CMP). In Koribacter versatilis (strain Ellin345), this protein is 2-C-methyl-D-erythritol 2,4-cyclodiphosphate synthase.